The primary structure comprises 86 residues: Electron transfer flavoprotein regulatory factor 1 (86 aa).

It belongs to the complex I LYR family. Homotetramer. Interacts with NDUFAB1. Interacts with ETFA. Interacts with ETFB.

It localises to the mitochondrion. Acts as a regulator of the electron transfer flavoprotein by promoting the removal of flavin from the ETF holoenzyme (composed of ETFA and ETFB). This chain is Electron transfer flavoprotein regulatory factor 1, found in Mus musculus (Mouse).